Consider the following 387-residue polypeptide: Phosphoglycerate kinase (387 aa).

Substrate-binding positions include 21 to 23 (DLN), Arg-36, 59 to 62 (HLGR), Arg-113, and Arg-146. ATP contacts are provided by residues Lys-197, Glu-314, and 340–343 (GGDT).

It belongs to the phosphoglycerate kinase family. In terms of assembly, monomer.

The protein resides in the cytoplasm. It carries out the reaction (2R)-3-phosphoglycerate + ATP = (2R)-3-phospho-glyceroyl phosphate + ADP. Its pathway is carbohydrate degradation; glycolysis; pyruvate from D-glyceraldehyde 3-phosphate: step 2/5. This chain is Phosphoglycerate kinase, found in Klebsiella pneumoniae (strain 342).